A 329-amino-acid chain; its full sequence is Phosphate acyltransferase (329 aa).

The protein belongs to the PlsX family. In terms of assembly, homodimer. Probably interacts with PlsY.

It localises to the cytoplasm. It carries out the reaction a fatty acyl-[ACP] + phosphate = an acyl phosphate + holo-[ACP]. The protein operates within lipid metabolism; phospholipid metabolism. Functionally, catalyzes the reversible formation of acyl-phosphate (acyl-PO(4)) from acyl-[acyl-carrier-protein] (acyl-ACP). This enzyme utilizes acyl-ACP as fatty acyl donor, but not acyl-CoA. The protein is Phosphate acyltransferase of Campylobacter concisus (strain 13826).